The primary structure comprises 71 residues: Small ribosomal subunit protein bS21 (71 aa).

Positions 40–71 (KPTQERKRKAAAAVKRNIRRTSRDVTKRKRLY) are disordered. Basic residues predominate over residues 45-71 (RKRKAAAAVKRNIRRTSRDVTKRKRLY).

The protein belongs to the bacterial ribosomal protein bS21 family.

This Xylella fastidiosa (strain M23) protein is Small ribosomal subunit protein bS21.